The chain runs to 933 residues: Serine/threonine-protein kinase EDR1 (933 aa).

Positions 1-10 are enriched in basic residues; sequence MKHIFKKLHR. Disordered regions lie at residues 1–74, 342–424, 527–550, and 604–650; these read MKHI…ADYM, CNSN…TAIG, HRDPRYGNTQSSYATSSSNGAISS, and HGQQ…YRND. Residues 37–48 are compositionally biased toward polar residues; sequence NPPQATPSSVTE. Residues 53–68 are compositionally biased toward low complexity; the sequence is AGATSSMASPAPTAAS. Residues 342–356 show a composition bias toward polar residues; sequence CNSNGNKFPTAQFSN. A compositionally biased stretch (low complexity) spans 367 to 378; sequence SSHSSMANYSSS. Residues 379–389 are compositionally biased toward basic and acidic residues; the sequence is LDRRTEAERTD. Residues 404–413 show a composition bias toward low complexity; that stretch reads SSPSSVTSST. The segment covering 533-550 has biased composition (polar residues); that stretch reads GNTQSSYATSSSNGAISS. Over residues 607–621 the composition is skewed to basic and acidic residues; that stretch reads QNDESHIHDHRKYTS. Residues 669 to 925 enclose the Protein kinase domain; that stretch reads LVIAERIGLG…QLTEVLKPLN (257 aa). ATP is bound by residues 675 to 683 and lysine 696; that span reads IGLGSYGEV. The active-site Proton acceptor is aspartate 792.

It belongs to the protein kinase superfamily. TKL Ser/Thr protein kinase family. RAF subfamily. In terms of assembly, interacts with KEG. Binds and recruited by EDR4 at the powdery mildew (e.g. G.cichoracearum) penetration site on the plasma membrane. Autophosphorylated.

It is found in the cell membrane. The protein localises to the endosome. Its subcellular location is the nucleus. It localises to the endoplasmic reticulum. The protein resides in the golgi apparatus. It is found in the trans-Golgi network. The protein localises to the early endosome. It catalyses the reaction L-seryl-[protein] + ATP = O-phospho-L-seryl-[protein] + ADP + H(+). It carries out the reaction L-threonyl-[protein] + ATP = O-phospho-L-threonyl-[protein] + ADP + H(+). In terms of biological role, MAPKKK serine/threonine-protein kinase involved in the regulation of a MAP kinase cascade (probably including MPK3 and MPK6) that negatively regulates salicylic acid- (SA-) dependent defense responses, abscisic acid (ABA) signaling, and ethylene-induced senescence. Also modulates stress response (e.g. drought) signaling and cell death, in an ORE9-dependent manner. Functions at a point of cross talk between ethylene, ABA and SA signaling that impinges on senescence and cell death. On the other hand, it confers sensitivity to various pathogens such as the fungus E.cichoracearum, the oomycete H.parasitica and the bacteria P.syringae pv. tomato DC3000. Required for resistance to some hemibiotrophic/necrotrophic fungal pathogens (e.g. C.gloeosporioides, C.higginsianum and A.brassicicola) through the induction of defensin expression, probably by repressing MYC2, an inhibitor of defensin genes (PDFs). Together with KEG, may regulate endocytic trafficking and/or the formation of signaling complexes on trans-Golgi network (TGN)/ early endosome (EE) vesicles during stress responses. The polypeptide is Serine/threonine-protein kinase EDR1 (EDR1) (Arabidopsis thaliana (Mouse-ear cress)).